Here is a 227-residue protein sequence, read N- to C-terminus: MMWKTVLITIFAAGVLADDFSQITAVVTSQCTKNNAEDKVPEVEAALRTFGNCLKGLVDLNVLKTEIEEAKPNGALDEVFKKYCDKSAQLKGCISSVLQGVRPCVGNEYANHINDAQNSTNQLIDFVCYKDGDRIALFIAEGGPECFQQKTENLKTCFLNLKQSFPTVESANNLSLVEKCAKVDEMTSCIVKSLEECSTPTPANMAESLIKFMRKDSPCHTALPKTD.

A signal peptide spans 1–17 (MMWKTVLITIFAAGVLA). N-linked (GlcNAc...) asparagine glycosylation is found at asparagine 118 and asparagine 173.

Belongs to the UPF0408 family. Expressed in the subesophageal body, fat bodies, hemocytes, midgut and Malpighian tubules. Not expressed in silk glands.

The protein resides in the secreted. The protein is 27 kDa glycoprotein of Bombyx mori (Silk moth).